We begin with the raw amino-acid sequence, 115 residues long: uncharacterized protein (115 aa).

The next 3 helical transmembrane spans lie at 23–43 (LVYA…LFFA), 63–83 (AMVT…VVMV), and 90–110 (NVVI…YVAA).

It localises to the cell membrane. This is an uncharacterized protein from Mycobacterium bovis (strain ATCC BAA-935 / AF2122/97).